The chain runs to 678 residues: Photosystem I P700 chlorophyll a apoprotein A1 (678 aa).

8 consecutive transmembrane segments (helical) span residues 75 to 98, 152 to 175, 192 to 216, 266 to 284, 302 to 325, 341 to 367, 384 to 406, and 458 to 476; these read VFAA…FHGA, LKVI…FHMH, STHH…HISL, SAMH…SVLG, WHLV…QMSN, VSLF…IGLV, IILG…LYVH, and FMVT…LILV. 2 residues coordinate [4Fe-4S] cluster: Cys500 and Cys509. Helical transmembrane passes span 516–537 and 591–613; these read HVFL…HFFW and LAAY…MFLF. His602 serves as a coordination point for chlorophyll a'. Residues Met610 and Tyr618 each contribute to the chlorophyll a site. Trp619 contributes to the phylloquinone binding site. Residues 651-671 traverse the membrane as a helical segment; sequence AVGFTHYLLGGIGSTWSFFLA.

Belongs to the PsaA/PsaB family. The PsaA/B heterodimer binds the P700 chlorophyll special pair and subsequent electron acceptors. PSI consists of a core antenna complex that captures photons, and an electron transfer chain that converts photonic excitation into a charge separation. The eukaryotic PSI reaction center is composed of at least 11 subunits. Requires P700 is a chlorophyll a/chlorophyll a' dimer, A0 is one or more chlorophyll a, A1 is one or both phylloquinones and FX is a shared 4Fe-4S iron-sulfur center. as cofactor.

It is found in the plastid. It localises to the chloroplast thylakoid membrane. It catalyses the reaction reduced [plastocyanin] + hnu + oxidized [2Fe-2S]-[ferredoxin] = oxidized [plastocyanin] + reduced [2Fe-2S]-[ferredoxin]. Functionally, psaA and PsaB bind P700, the primary electron donor of photosystem I (PSI), as well as the electron acceptors A0, A1 and FX. PSI is a plastocyanin/cytochrome c6-ferredoxin oxidoreductase, converting photonic excitation into a charge separation, which transfers an electron from the donor P700 chlorophyll pair to the spectroscopically characterized acceptors A0, A1, FX, FA and FB in turn. Oxidized P700 is reduced on the lumenal side of the thylakoid membrane by plastocyanin or cytochrome c6. The protein is Photosystem I P700 chlorophyll a apoprotein A1 of Amphidinium carterae (Dinoflagellate).